Reading from the N-terminus, the 823-residue chain is Pentatricopeptide repeat-containing protein At4g33990 (823 aa).

PPR repeat units lie at residues 85 to 115 (NVCISAKLVNLYCYLGNVALARHTFDHIQNR), 116 to 151 (DVYAWNLMISGYGRAGNSSEVIRCFSLFMLSSGLTP), 152 to 183 (DYRTFPSVLKACRTVIDGNKIHCLALKFGFMW), 184 to 214 (DVYVAASLIHLYSRYKAVGNARILFDEMPVR), 215 to 249 (DMGSWNAMISGYCQSGNAKEALTLSNGLRAMDSVT), 252 to 280 (SLLSACTEAGDFNRGVTIHSYSIKHGLES), 281 to 311 (ELFVSNKLIDLYAEFGRLRDCQKVFDRMYVR), 312 to 346 (DLISWNSIIKAYELNEQPLRAISLFQEMRLSRIQP), 347 to 381 (DCLTLISLASILSQLGDIRACRSVQGFTLRKGWFL), 383 to 413 (DITIGNAVVVMYAKLGLVDSARAVFNWLPNT), 414 to 448 (DVISWNTIISGYAQNGFASEAIEMYNIMEEEGEIA), 450 to 484 (NQGTWVSVLPACSQAGALRQGMKLHGRLLKNGLYL), 485 to 515 (DVFVVTSLADMYGKCGRLEDALSLFYQIPRV), 516 to 550 (NSVPWNTLIACHGFHGHGEKAVMLFKEMLDEGVKP), 551 to 581 (DHITFVTLLSACSHSGLVDEGQWCFEMMQTD), and 587 to 617 (SLKHYGCMVDMYGRAGQLETALKFIKSMSLQ). The segment at 622-697 (IWGALLSACR…TPGWSSMEVD (76 aa)) is type E motif. The type E(+) motif stretch occupies residues 698-728 (NKVEVFYTGNQTHPMYEEMYRELTALQAKLK). The tract at residues 729–823 (MIGYVPDHRF…NGVCSCGDYW (95 aa)) is type DYW motif.

The protein belongs to the PPR family. PCMP-H subfamily.

The protein is Pentatricopeptide repeat-containing protein At4g33990 (EMB2758) of Arabidopsis thaliana (Mouse-ear cress).